The sequence spans 289 residues: METEASNESIEKSLPKRIALLIQYNGSGFCGWQRQKEGNSVQSILEEAVSSLDPFQPIKVVAAGRTDSGVHASGQVAHFDCSGFIPANRWAAALNGRLPKAIRVRYSALRPITWHACFSATYRRYRYTIYNGCKPNLFLSPWCWHRYQFRLDENLMNLALQGIKGFHDFTAFQRAGSNRPNALTTVEDVHLFRQGDLVSIDIQATGFLYGMVRLLVGQLVAVGEHRISVAEFERRWKLKLREEVREAAPPNGLSLIRVGYETMIFPENIAFDSFPFFSLSTSDPPPSPQ.

D67 functions as the Nucleophile in the catalytic mechanism. Y125 provides a ligand contact to substrate.

The protein belongs to the tRNA pseudouridine synthase TruA family. Homodimer.

The catalysed reaction is uridine(38/39/40) in tRNA = pseudouridine(38/39/40) in tRNA. In terms of biological role, formation of pseudouridine at positions 38, 39 and 40 in the anticodon stem and loop of transfer RNAs. This Prochlorococcus marinus (strain MIT 9211) protein is tRNA pseudouridine synthase A.